The primary structure comprises 397 residues: Protein-glutamate methylesterase/protein-glutamine glutaminase of group 2 operon (397 aa).

The 119-residue stretch at 21–139 (RVMIVDDSVV…EASAADTFHH (119 aa)) folds into the Response regulatory domain. Asp-72 carries the post-translational modification 4-aspartylphosphate. The 190-residue stretch at 199–388 (PFSTLAPKVL…LPLNQIGAKV (190 aa)) folds into the CheB-type methylesterase domain. Catalysis depends on residues Ser-213, His-241, and Asp-337.

Belongs to the CheB family. Phosphorylated by CheA. Phosphorylation of the N-terminal regulatory domain activates the methylesterase activity.

The protein resides in the cytoplasm. It catalyses the reaction [protein]-L-glutamate 5-O-methyl ester + H2O = L-glutamyl-[protein] + methanol + H(+). The enzyme catalyses L-glutaminyl-[protein] + H2O = L-glutamyl-[protein] + NH4(+). Its function is as follows. Involved in chemotaxis. Part of a chemotaxis signal transduction system that modulates chemotaxis in response to various stimuli. Catalyzes the demethylation of specific methylglutamate residues introduced into the chemoreceptors (methyl-accepting chemotaxis proteins or MCP) by CheR. Also mediates the irreversible deamidation of specific glutamine residues to glutamic acid. The sequence is that of Protein-glutamate methylesterase/protein-glutamine glutaminase of group 2 operon from Bradyrhizobium diazoefficiens (strain JCM 10833 / BCRC 13528 / IAM 13628 / NBRC 14792 / USDA 110).